We begin with the raw amino-acid sequence, 912 residues long: Androgen receptor (912 aa).

The modulating stretch occupies residues 1–550 (MEVQLGLGRV…PIDYYFPPQK (550 aa)). An interaction with ZNF318 region spans residues 1–579 (MEVQLGLGRV…GSCKVFFKRA (579 aa)). 2 disordered regions span residues 35–156 (QNPG…GPTF) and 204–236 (QQQQ…YLGG). S69 is subject to Phosphoserine; by CDK9. S82 carries the phosphoserine modification. A compositionally biased stretch (low complexity) spans 204-213 (QQQQEVVSEG). Positions 226-236 (PTSSKDSYLGG) are enriched in polar residues. The residue at position 233 (Y233) is a Phosphotyrosine; by CSK. A Phosphoserine modification is found at S266. At Y277 the chain carries Phosphotyrosine; by CSK and TNK2. Phosphotyrosine; by CSK is present on residues Y315, Y354, Y365, and Y370. Residue Y371 is modified to Phosphotyrosine; by CSK and TNK2. The interval 375–394 (LSLAGPPPPPPSPHPHARIK) is disordered. Residues 379–388 (GPPPPPPSPH) are compositionally biased toward pro residues. A Glycyl lysine isopeptide (Lys-Gly) (interchain with G-Cter in SUMO) cross-link involves residue K394. A Phosphotyrosine; by CSK modification is found at Y401. The disordered stretch occupies residues 452-490 (LYGPCGGSGGGGTGESVSVTPYGYTRPQQGLTGQEGDFP). Residues 455-465 (PCGGSGGGGTG) show a composition bias toward gly residues. K513 participates in a covalent cross-link: Glycyl lysine isopeptide (Lys-Gly) (interchain with G-Cter in SUMO). Residues Y527 and Y544 each carry the phosphotyrosine; by CSK modification. The interaction with LPXN stretch occupies residues 544–911 (YYFPPQKTCL…GKVKPIYFHT (368 aa)). Residues 551 to 624 (TCLICGDEAS…AGMTLGARRL (74 aa)) constitute a DNA-binding region (nuclear receptor). 2 consecutive NR C4-type zinc fingers follow at residues 552–572 (CLIC…CGSC) and 588–612 (CASR…LRKC). The segment at 564–654 (YGALTCGSCK…TEETTQKLTV (91 aa)) is interaction with HIPK3. The interval 584–911 (QKYLCASRND…GKVKPIYFHT (328 aa)) is interaction with CCAR1. The tract at residues 617-911 (MTLGARRLKK…GKVKPIYFHT (295 aa)) is interaction with KAT7. S643 carries the post-translational modification Phosphoserine; by STK4/MST1. The NR LBD domain occupies 661 to 892 (ECQPIFLNVL…DFPEMMAEII (232 aa)). 2 residues coordinate 17beta-hydroxy-5alpha-androstan-3-one: N698 and R745. Residues K838 and K840 each participate in a glycyl lysine isopeptide (Lys-Gly) (interchain with G-Cter in ubiquitin) cross-link. T870 is a binding site for 17beta-hydroxy-5alpha-androstan-3-one. Y908 bears the Phosphotyrosine; by CSK mark.

Belongs to the nuclear hormone receptor family. NR3 subfamily. In terms of assembly, binds DNA as a homodimer. Part of a ternary complex containing AR, EFCAB6/DJBP and PARK7. Interacts with HIPK3 and NR0B2 in the presence of androgen. The ligand binding domain interacts with KAT7/HBO1 in the presence of dihydrotestosterone. Interacts with EFCAB6/DJBP, PQBP1, RANBP9, RBAK, SPDEF, SRA1, TGFB1I1 and RREB1. Interacts with ZMIZ1/ZIMP10 and ZMIZ2/ZMIP7 which both enhance its transactivation activity. Interacts with SLC30A9 and RAD54L2/ARIP4. Interacts with MACROD1 (via macro domain). Interacts via the ligand-binding domain with LXXLL and FXXLF motifs from NCOA1, NCOA2, NCOA3 and MAGEA11. Interacts (via nuclear receptor DNA binding domain and nuclear receptor ligand binding domain) with NCOA4. The AR N-terminal poly-Gln region binds Ran resulting in enhancement of AR-mediated transactivation. Ran-binding decreases as the poly-Gln length increases. Interacts with HIP1 (via coiled coil domain). Interacts (via ligand-binding domain) with TRIM68. Interacts with TNK2. Interacts with USP26. Interacts with RNF6. Interacts (regulated by RNF6 probably through polyubiquitination) with RNF14; regulates AR transcriptional activity. Interacts with PRMT2 and TRIM24. Interacts with RACK1. Interacts with RANBP10; this interaction enhances dihydrotestosterone-induced AR transcriptional activity. Interacts with PRPF6 in a hormone-independent way; this interaction enhances dihydrotestosterone-induced AR transcriptional activity. Interacts with STK4/MST1. Interacts with ZIPK/DAPK3. Interacts with LPXN. Interacts with MAK. Part of a complex containing AR, MAK and NCOA3. Interacts with CRY1. Interacts with CCAR1 and GATA2. Interacts with ZNF318. Interacts with BUD31. Interacts with ARID4A. Interacts with ARID4B. Interacts (via NR LBD domain) with ZBTB7A; the interaction is direct and androgen-dependent. Interacts with NCOR1. Interacts with NCOR2. Interacts with CRY2 in a ligand-dependent manner. Phosphorylation by TNK2 enhances the DNA-binding and transcriptional activity. Phosphorylation at Ser-69 by CDK9 regulates AR promoter selectivity and cell growth. In terms of processing, sumoylated on Lys-394 (major) and Lys-513. Ubiquitinated. Deubiquitinated by USP26. 'Lys-6' and 'Lys-27'-linked polyubiquitination by RNF6 modulates AR transcriptional activity and specificity. Post-translationally, palmitoylated by ZDHHC7 and ZDHHC21. Palmitoylation is required for plasma membrane targeting and for rapid intracellular signaling via ERK and AKT kinases and cAMP generation.

The protein resides in the nucleus. It is found in the cytoplasm. In terms of biological role, steroid hormone receptors are ligand-activated transcription factors that regulate eukaryotic gene expression and affect cellular proliferation and differentiation in target tissues. Transcription factor activity is modulated by bound coactivator and corepressor proteins like ZBTB7A that recruits NCOR1 and NCOR2 to the androgen response elements/ARE on target genes, negatively regulating androgen receptor signaling and androgen-induced cell proliferation. Transcription activation is also down-regulated by NR0B2. Activated, but not phosphorylated, by HIPK3 and ZIPK/DAPK3. The chain is Androgen receptor (AR) from Crocuta crocuta (Spotted hyena).